The chain runs to 231 residues: MKIGIIGAMEPEVAHLIAAMTNATSQTIAGIEFIAGTLAGKDVVVTRSGIGKVAASIATTLLIEKYTPDAVINTGSAGGFVDTLAIGDIVISSEVRHHDVDVTAFGYEIGQMAQQPAAFIPAAHLVEAANKAIAQLGEVKAIEGLICTGDSFICDPVRTQAMLKNFPTMAACEMEGAAIAQVCHQFGVPFVVIRSLSDNANNDSPVDFDSYIVKAGYHSALMVMLLLEQLK.

Catalysis depends on glutamate 12, which acts as the Proton acceptor. Substrate-binding positions include glycine 78, isoleucine 153, and methionine 174–glutamate 175. Aspartate 198 functions as the Proton donor in the catalytic mechanism.

The protein belongs to the PNP/UDP phosphorylase family. MtnN subfamily.

The catalysed reaction is S-adenosyl-L-homocysteine + H2O = S-(5-deoxy-D-ribos-5-yl)-L-homocysteine + adenine. It catalyses the reaction S-methyl-5'-thioadenosine + H2O = 5-(methylsulfanyl)-D-ribose + adenine. It carries out the reaction 5'-deoxyadenosine + H2O = 5-deoxy-D-ribose + adenine. The protein operates within amino-acid biosynthesis; L-methionine biosynthesis via salvage pathway; S-methyl-5-thio-alpha-D-ribose 1-phosphate from S-methyl-5'-thioadenosine (hydrolase route): step 1/2. Catalyzes the irreversible cleavage of the glycosidic bond in both 5'-methylthioadenosine (MTA) and S-adenosylhomocysteine (SAH/AdoHcy) to adenine and the corresponding thioribose, 5'-methylthioribose and S-ribosylhomocysteine, respectively. Also cleaves 5'-deoxyadenosine, a toxic by-product of radical S-adenosylmethionine (SAM) enzymes, into 5-deoxyribose and adenine. This Shewanella sp. (strain W3-18-1) protein is 5'-methylthioadenosine/S-adenosylhomocysteine nucleosidase.